Reading from the N-terminus, the 584-residue chain is Membrane protein insertase YidC (584 aa).

5 helical membrane-spanning segments follow: residues 5-25 (SVIG…FMAP), 358-378 (FIGN…LVTY), 428-448 (LGGC…FYVF), 478-498 (IPLY…AVFL), and 516-536 (IYIF…GLGL). The segment at 563–584 (ALSPVVAAPPKAPKKKKNARKR) is disordered. The span at 574-584 (APKKKKNARKR) shows a compositional bias: basic residues.

Belongs to the OXA1/ALB3/YidC family. Type 1 subfamily. Interacts with the Sec translocase complex via SecD. Specifically interacts with transmembrane segments of nascent integral membrane proteins during membrane integration.

It localises to the cell inner membrane. In terms of biological role, required for the insertion and/or proper folding and/or complex formation of integral membrane proteins into the membrane. Involved in integration of membrane proteins that insert both dependently and independently of the Sec translocase complex, as well as at least some lipoproteins. Aids folding of multispanning membrane proteins. This Prosthecochloris aestuarii (strain DSM 271 / SK 413) protein is Membrane protein insertase YidC.